The chain runs to 508 residues: Bifunctional purine biosynthesis protein PurH (508 aa).

Positions 1 to 145 (MTKRALISVS…KNHQYVTVIV (145 aa)) constitute an MGS-like domain.

It belongs to the PurH family.

The catalysed reaction is (6R)-10-formyltetrahydrofolate + 5-amino-1-(5-phospho-beta-D-ribosyl)imidazole-4-carboxamide = 5-formamido-1-(5-phospho-D-ribosyl)imidazole-4-carboxamide + (6S)-5,6,7,8-tetrahydrofolate. It carries out the reaction IMP + H2O = 5-formamido-1-(5-phospho-D-ribosyl)imidazole-4-carboxamide. Its pathway is purine metabolism; IMP biosynthesis via de novo pathway; 5-formamido-1-(5-phospho-D-ribosyl)imidazole-4-carboxamide from 5-amino-1-(5-phospho-D-ribosyl)imidazole-4-carboxamide (10-formyl THF route): step 1/1. The protein operates within purine metabolism; IMP biosynthesis via de novo pathway; IMP from 5-formamido-1-(5-phospho-D-ribosyl)imidazole-4-carboxamide: step 1/1. The polypeptide is Bifunctional purine biosynthesis protein PurH (Lysinibacillus sphaericus (strain C3-41)).